A 175-amino-acid chain; its full sequence is 3-hydroxydecanoyl-[acyl-carrier-protein] dehydratase (175 aa).

His-71 is an active-site residue.

This sequence belongs to the thioester dehydratase family. FabA subfamily. In terms of assembly, homodimer.

Its subcellular location is the cytoplasm. The catalysed reaction is a (3R)-hydroxyacyl-[ACP] = a (2E)-enoyl-[ACP] + H2O. It carries out the reaction (3R)-hydroxydecanoyl-[ACP] = (2E)-decenoyl-[ACP] + H2O. The enzyme catalyses (2E)-decenoyl-[ACP] = (3Z)-decenoyl-[ACP]. The protein operates within lipid metabolism; fatty acid biosynthesis. Functionally, necessary for the introduction of cis unsaturation into fatty acids. Catalyzes the dehydration of (3R)-3-hydroxydecanoyl-ACP to E-(2)-decenoyl-ACP and then its isomerization to Z-(3)-decenoyl-ACP. Can catalyze the dehydratase reaction for beta-hydroxyacyl-ACPs with saturated chain lengths up to 16:0, being most active on intermediate chain length. This is 3-hydroxydecanoyl-[acyl-carrier-protein] dehydratase from Rhodopseudomonas palustris (strain ATCC BAA-98 / CGA009).